A 154-amino-acid chain; its full sequence is 6,7-dimethyl-8-ribityllumazine synthase (154 aa).

5-amino-6-(D-ribitylamino)uracil-binding positions include Phe-22, 56–58, and 80–82; these read SFE and AVI. 85-86 contacts (2S)-2-hydroxy-3-oxobutyl phosphate; it reads ST. Residue His-88 is the Proton donor of the active site. Tyr-113 is a 5-amino-6-(D-ribitylamino)uracil binding site. Arg-127 serves as a coordination point for (2S)-2-hydroxy-3-oxobutyl phosphate.

This sequence belongs to the DMRL synthase family. As to quaternary structure, forms an icosahedral capsid composed of 60 subunits, arranged as a dodecamer of pentamers.

It carries out the reaction (2S)-2-hydroxy-3-oxobutyl phosphate + 5-amino-6-(D-ribitylamino)uracil = 6,7-dimethyl-8-(1-D-ribityl)lumazine + phosphate + 2 H2O + H(+). It functions in the pathway cofactor biosynthesis; riboflavin biosynthesis; riboflavin from 2-hydroxy-3-oxobutyl phosphate and 5-amino-6-(D-ribitylamino)uracil: step 1/2. In terms of biological role, catalyzes the formation of 6,7-dimethyl-8-ribityllumazine by condensation of 5-amino-6-(D-ribitylamino)uracil with 3,4-dihydroxy-2-butanone 4-phosphate. This is the penultimate step in the biosynthesis of riboflavin. This Sulfurihydrogenibium sp. (strain YO3AOP1) protein is 6,7-dimethyl-8-ribityllumazine synthase.